A 671-amino-acid polypeptide reads, in one-letter code: cGMP-dependent protein kinase 1 (671 aa).

Ser-2 is modified (N-acetylserine). Residues Ser-2–Thr-59 are a coiled coil. A required for dimerization region spans residues Ser-2–Asp-102. A leucine-zipper region spans residues Ala-9–Gln-44. The autoinhibitory domain stretch occupies residues Pro-50–His-75. At Thr-59 the chain carries Phosphothreonine; by autocatalysis. Residues Phe-103 to Pro-220 form a cGMP-binding, high affinity region. Residues Gly-167–Ala-170, Arg-177–Thr-178, Arg-282, Gly-291–Ala-294, Arg-301–Thr-302, and Tyr-336 contribute to the 3',5'-cyclic GMP site. Residues Thr-221–Ala-341 are cGMP-binding, low affinity. The 260-residue stretch at Phe-360–Phe-619 folds into the Protein kinase domain. Residues Leu-366–Val-374 and Lys-390 contribute to the ATP site. Asp-484 functions as the Proton acceptor in the catalytic mechanism. A Phosphothreonine modification is found at Thr-515. The region spanning Glu-620–Phe-671 is the AGC-kinase C-terminal domain. Residues Pro-635–Phe-671 form a disordered region. Positions Phe-652–Pro-661 are enriched in acidic residues.

Belongs to the protein kinase superfamily. AGC Ser/Thr protein kinase family. cGMP subfamily. As to quaternary structure, isoform alpha: parallel homodimer or heterodimer and also heterotetramer. Interacts directly with PPP1R12A. Non-covalent dimer of dimer of PRKG1-PRKG1 and PPP1R12A-PPP1R12A. This interaction targets PRKG1 to stress fibers to mediate smooth muscle cell relaxation and vasodilation in responses to rises in cGMP. Isoform beta: antiparallel homodimer. Part of cGMP kinase signaling complex at least composed of ACTA2/alpha-actin, CNN1/calponin H1, PLN/phospholamban, PRKG1 and ITPR1. Interacts with IRAG1. Forms a stable complex with ITPR1, IRAG1, and isoform beta of PRKG1. Interacts with TRPC7 (via ankyrin repeat domain). Isoform alpha interacts with RGS2. Interacts with GTF2I. In terms of processing, autophosphorylation increases kinase activity. Post-translationally, 65 kDa monomer is produced by proteolytic cleavage.

It localises to the cytoplasm. The enzyme catalyses L-seryl-[protein] + ATP = O-phospho-L-seryl-[protein] + ADP + H(+). It catalyses the reaction L-threonyl-[protein] + ATP = O-phospho-L-threonyl-[protein] + ADP + H(+). In the absence of cGMP, PRKG1 activity is suppressed by autoinhibitory contacts. Its function is as follows. Serine/threonine protein kinase that acts as a key mediator of the nitric oxide (NO)/cGMP signaling pathway. GMP binding activates PRKG1, which phosphorylates serines and threonines on many cellular proteins. Numerous protein targets for PRKG1 phosphorylation are implicated in modulating cellular calcium, but the contribution of each of these targets may vary substantially among cell types. Proteins that are phosphorylated by PRKG1 regulate platelet activation and adhesion, smooth muscle contraction, cardiac function, gene expression, feedback of the NO-signaling pathway, and other processes involved in several aspects of the CNS like axon guidance, hippocampal and cerebellar learning, circadian rhythm and nociception. Smooth muscle relaxation is mediated through lowering of intracellular free calcium, by desensitization of contractile proteins to calcium, and by decrease in the contractile state of smooth muscle or in platelet activation. Regulates intracellular calcium levels via several pathways: phosphorylates IRAG1 and inhibits IP3-induced Ca(2+) release from intracellular stores, phosphorylation of KCNMA1 (BKCa) channels decreases intracellular Ca(2+) levels, which leads to increased opening of this channel. PRKG1 phosphorylates the canonical transient receptor potential channel (TRPC) family which inactivates the associated inward calcium current. Another mode of action of NO/cGMP/PKGI signaling involves PKGI-mediated inactivation of the Ras homolog gene family member A (RhoA). Phosphorylation of RHOA by PRKG1 blocks the action of this protein in myriad processes: regulation of RHOA translocation; decreasing contraction; controlling vesicle trafficking, reduction of myosin light chain phosphorylation resulting in vasorelaxation. Activation of PRKG1 by NO signaling also alters gene expression in a number of tissues. In smooth muscle cells, increased cGMP and PRKG1 activity influence expression of smooth muscle-specific contractile proteins, levels of proteins in the NO/cGMP signaling pathway, down-regulation of the matrix proteins osteopontin and thrombospondin-1 to limit smooth muscle cell migration and phenotype. Regulates vasodilator-stimulated phosphoprotein (VASP) functions in platelets and smooth muscle. The protein is cGMP-dependent protein kinase 1 (PRKG1) of Oryctolagus cuniculus (Rabbit).